A 312-amino-acid polypeptide reads, in one-letter code: DNA-directed RNA polymerase subunit alpha (312 aa).

The tract at residues 1 to 229 is alpha N-terminal domain (alpha-NTD); sequence MLQYQIDRID…ELFQPLATVT (229 aa). Residues 240 to 312 form an alpha C-terminal domain (alpha-CTD) region; it reads PSPEAQIPLE…ISIPQSRTSV (73 aa).

It belongs to the RNA polymerase alpha chain family. In terms of assembly, in cyanobacteria the RNAP catalytic core is composed of 2 alpha, 1 beta, 1 beta', 1 gamma and 1 omega subunit. When a sigma factor is associated with the core the holoenzyme is formed, which can initiate transcription.

It catalyses the reaction RNA(n) + a ribonucleoside 5'-triphosphate = RNA(n+1) + diphosphate. Functionally, DNA-dependent RNA polymerase catalyzes the transcription of DNA into RNA using the four ribonucleoside triphosphates as substrates. The protein is DNA-directed RNA polymerase subunit alpha of Prochlorococcus marinus (strain AS9601).